Here is a 340-residue protein sequence, read N- to C-terminus: MNTDIANLKNQCIEELSRIKSLQELEDFQVKYLGKKGILKSKLKELSKLEPAIRAQVGKELNSLREYLEESIAIQRKRFLEEEKQKRIQSERIDVTIPGKRVEIGAIHILSQVQNEIAEIFLNMGYEIAEGPEVELDYYNFEALNIPADHPARDTQDTFYISEDVLLRTHTSPVQIRVMKSKKPPIKIISPGRVYRSDEVDSTHSPIFHQIEGLFVDKGVTMADLKGTLEVFAKRFFGEQTKVRFRPHHFPFTEPSAEVDISCIFCGGKGCRTCKGEGWIEILGAGMVHRKVLLNCGIDPDIYTGFAFGMGVERIALLRYEIEDIRLFYENDLRFLKQFR.

Glutamate 254 is a binding site for Mg(2+).

This sequence belongs to the class-II aminoacyl-tRNA synthetase family. Phe-tRNA synthetase alpha subunit type 1 subfamily. In terms of assembly, tetramer of two alpha and two beta subunits. Mg(2+) is required as a cofactor.

It localises to the cytoplasm. The enzyme catalyses tRNA(Phe) + L-phenylalanine + ATP = L-phenylalanyl-tRNA(Phe) + AMP + diphosphate + H(+). This chain is Phenylalanine--tRNA ligase alpha subunit, found in Caldicellulosiruptor bescii (strain ATCC BAA-1888 / DSM 6725 / KCTC 15123 / Z-1320) (Anaerocellum thermophilum).